The sequence spans 629 residues: Embryonic polyadenylate-binding protein (629 aa).

RRM domains are found at residues 11 to 89 (ASLY…WSQR), 99 to 175 (GNVF…HFKS), 191 to 268 (TNVY…RAQK), and 294 to 370 (VNLY…LAQR). A PABC domain is found at 539-616 (QEPLTASSLA…AVAVLQAHQA (78 aa)).

This sequence belongs to the polyadenylate-binding protein type-1 family. In terms of assembly, interacts with dazl in an RNA-independent manner. The C-terminus can self-associate and also interact with the C-terminus of pabpc1, independently of RNA. RRM 1 and RRM 2 interact with both eif4g1 and paip1, and the C-terminus also interacts with paip1. Prior to oocyte maturation, found in a complex with dazl and pum2 proteins and spdy1 mRNA; pum2 dissociates from the complex during maturation. Interacts with the translation termination factor sup35/erf3.

It is found in the cytoplasm. In terms of biological role, binds and protects the poly(A) tail of mRNA with or without an AU-rich element (ARE) and prevents mRNA deadenylation. Stimulates the translation of mRNAs to which it is bound during early development. This Xenopus tropicalis (Western clawed frog) protein is Embryonic polyadenylate-binding protein.